The following is a 133-amino-acid chain: MILAFDYGTQKIGVASGNELLGTATPLKALPCKNTQPNWDDIAALLKEWEPEALVVGLPLNMDGSDSESTVRARKFANRLHGRFGKKVWLIDERLSTREARERTGIKKADSRVDSMAAVIIAEGFFAGDAKVF.

The protein belongs to the YqgF nuclease family.

The protein resides in the cytoplasm. In terms of biological role, could be a nuclease involved in processing of the 5'-end of pre-16S rRNA. In Alcanivorax borkumensis (strain ATCC 700651 / DSM 11573 / NCIMB 13689 / SK2), this protein is Putative pre-16S rRNA nuclease.